A 380-amino-acid chain; its full sequence is Cytochrome b (380 aa).

A run of 4 helical transmembrane segments spans residues 34–54, 78–99, 114–134, and 179–199; these read FGSL…LLAT, WLIR…YLHI, WNTG…GYVL, and FFAL…IHLT. Positions 84 and 98 each coordinate heme b. The heme b site is built by His183 and His197. His202 provides a ligand contact to a ubiquinone. The next 4 helical transmembrane spans lie at 227-247, 289-309, 321-341, and 348-368; these read LKDI…ALFS, LGGV…PLLH, LSQL…WVGS, and FIII…ILFP.

It belongs to the cytochrome b family. The cytochrome bc1 complex contains 11 subunits: 3 respiratory subunits (MT-CYB, CYC1 and UQCRFS1), 2 core proteins (UQCRC1 and UQCRC2) and 6 low-molecular weight proteins (UQCRH/QCR6, UQCRB/QCR7, UQCRQ/QCR8, UQCR10/QCR9, UQCR11/QCR10 and a cleavage product of UQCRFS1). This cytochrome bc1 complex then forms a dimer. The cofactor is heme b.

Its subcellular location is the mitochondrion inner membrane. Functionally, component of the ubiquinol-cytochrome c reductase complex (complex III or cytochrome b-c1 complex) that is part of the mitochondrial respiratory chain. The b-c1 complex mediates electron transfer from ubiquinol to cytochrome c. Contributes to the generation of a proton gradient across the mitochondrial membrane that is then used for ATP synthesis. In Ciconia ciconia (White stork), this protein is Cytochrome b (MT-CYB).